The sequence spans 338 residues: Ketol-acid reductoisomerase (NADP(+)) (338 aa).

In terms of domain architecture, KARI N-terminal Rossmann spans 2–182 (TKMYYEEDTD…GGARAGVLET (181 aa)). NADP(+) contacts are provided by residues 25-28 (YGSQ), S51, S53, and 83-86 (DELQ). H108 is an active-site residue. G134 is an NADP(+) binding site. Residues 183-330 (TFRTETETDL…SEIRKLYCWN (148 aa)) form the KARI C-terminal knotted domain. 4 residues coordinate Mg(2+): D191, E195, E227, and E231. S252 provides a ligand contact to substrate.

Belongs to the ketol-acid reductoisomerase family. The cofactor is Mg(2+).

The enzyme catalyses (2R)-2,3-dihydroxy-3-methylbutanoate + NADP(+) = (2S)-2-acetolactate + NADPH + H(+). It carries out the reaction (2R,3R)-2,3-dihydroxy-3-methylpentanoate + NADP(+) = (S)-2-ethyl-2-hydroxy-3-oxobutanoate + NADPH + H(+). Its pathway is amino-acid biosynthesis; L-isoleucine biosynthesis; L-isoleucine from 2-oxobutanoate: step 2/4. It participates in amino-acid biosynthesis; L-valine biosynthesis; L-valine from pyruvate: step 2/4. Its function is as follows. Involved in the biosynthesis of branched-chain amino acids (BCAA). Catalyzes an alkyl-migration followed by a ketol-acid reduction of (S)-2-acetolactate (S2AL) to yield (R)-2,3-dihydroxy-isovalerate. In the isomerase reaction, S2AL is rearranged via a Mg-dependent methyl migration to produce 3-hydroxy-3-methyl-2-ketobutyrate (HMKB). In the reductase reaction, this 2-ketoacid undergoes a metal-dependent reduction by NADPH to yield (R)-2,3-dihydroxy-isovalerate. The sequence is that of Ketol-acid reductoisomerase (NADP(+)) from Clostridium botulinum (strain Eklund 17B / Type B).